We begin with the raw amino-acid sequence, 207 residues long: Cytidylyl-2-hydroxypropylphosphonate hydrolase (207 aa).

4 residues coordinate CDP: Trp68, Arg74, Gln76, and Ser77. Positions 109, 125, 127, and 129 each coordinate a divalent metal cation. CDP is bound at residue Lys142. The active-site Proton donor is Lys142. Asp143 is a binding site for a divalent metal cation.

Belongs to the FomD family. Mn(2+) serves as cofactor. Requires Co(2+) as cofactor.

The catalysed reaction is cytidine 5'-({hydroxy[(S)-2-hydroxypropyl]phosphonoyl}phosphate) + H2O = (S)-2-hydroxypropylphosphonate + CMP + H(+). It functions in the pathway antibiotic biosynthesis; fosfomycin biosynthesis. Its activity is regulated as follows. Hydrolysis of (S)-HPP-CMP is inhibited by CDP. Involved in fosfomycin biosynthesis. Catalyzes the hydrolysis of cytidylyl (S)-2-hydroxypropylphosphonate ((S)-HPP-CMP) to give (S)-2-hydroxypropylphosphonate ((S)-HPP) and CMP. Can also hydrolyze (R)-HPP-CMP and cytidylyl 2-hydroxyethylphosphonate (HEP-CMP), which is a biosynthetic intermediate before C-methylation, but the catalytic efficiency is much higher with (S)-HPP-CMP. The protein is Cytidylyl-2-hydroxypropylphosphonate hydrolase of Streptomyces fradiae (Streptomyces roseoflavus).